Consider the following 199-residue polypeptide: V-set and transmembrane domain-containing protein 5 (199 aa).

An N-terminal signal peptide occupies residues 1 to 27 (MRPPRCVGRTQGIPLGLLAFWVATARC). Over 28-146 (LQSQGVSLYI…VSEIRYEDLH (119 aa)) the chain is Extracellular. The Ig-like C2-type domain maps to 36-138 (YIPRSAINAT…QSGTILLHVS (103 aa)). Asn-43, Asn-87, and Asn-101 each carry an N-linked (GlcNAc...) asparagine glycan. Residues 147–167 (FVAVFFALLAAVAVVLISLMW) traverse the membrane as a helical segment. At 168-199 (VCNQCAYKFQRKRRYKLRESTTEEIEMKDVEC) the chain is on the cytoplasmic side. The important for CDC42-dependent filopodia induction stretch occupies residues 169 to 185 (CNQCAYKFQRKRRYKLR).

As to quaternary structure, can homooligomerize through cis interactions within the same cell membrane. Post-translationally, N-glycosylated.

Its subcellular location is the cell membrane. The protein resides in the cell projection. It is found in the dendrite. The protein localises to the axon. Functionally, cell adhesion-like membrane protein of the central nervous system (CNS) which modulates both the position and complexity of central neurons by altering their membrane morphology and dynamics. Involved in the formation of neuronal dendrites and protrusions including dendritic filopodia. In synaptogenesis, regulates synapse formation by altering dendritic spine morphology and actin distribution. Promotes formation of unstable neuronal spines such as thin and branched types. Regulates neuronal morphogenesis and migration during cortical development in the brain. The sequence is that of V-set and transmembrane domain-containing protein 5 (Vstm5) from Rattus norvegicus (Rat).